We begin with the raw amino-acid sequence, 293 residues long: Bisanhydrobacterioruberin hydratase (293 aa).

Helical transmembrane passes span 36–56 (IAVVFPLVGAVTLLASAEGLL), 66–86 (FVLFGTFVMRLPLVAGIFPLV), 89–109 (RAGLALVALTLYSYGIELVGV), 134–154 (FGLPVFFFPLVLNAYLLVLLL), 171–191 (ATVMLVDLVLDPGAVAIGFWI), 199–219 (GVPWQNYAGWLLSGSVAVLLF), and 254–274 (LFYTNWVPFGLAALLGAGLLW).

It belongs to the BABR hydratase family.

It is found in the membrane. The catalysed reaction is bacterioruberin = bisanhydrobacterioruberin + 2 H2O. The protein operates within carotenoid biosynthesis. Functionally, involved in the biosynthesis of the acyclic C50 carotenoid bacterioruberin (BR). Catalyzes the reaction that introduces hydroxyl groups to C3'' and C3''' of bisanhydrobacterioruberin (BABR) to generate BR. The sequence is that of Bisanhydrobacterioruberin hydratase from Haloarcula japonica (strain ATCC 49778 / DSM 6131 / JCM 7785 / NBRC 101032 / NCIMB 13157 / TR-1).